Here is a 1299-residue protein sequence, read N- to C-terminus: Sophorolipid transporter (1299 aa).

Topologically, residues 1–64 (MVDDIQVEKR…FCTPLDVFLE (64 aa)) are cytoplasmic. A helical membrane pass occupies residues 65–85 (ILALFFAAVHGAALPMFTLVV). Residues 65-356 (ILALFFAAVH…IAPNVRFLVK (292 aa)) form the ABC transmembrane type-1 1 domain. Topologically, residues 86–114 (GAIFNTFRDFTSYDLKGNEFQHKVNHLSL) are extracellular. A helical membrane pass occupies residues 115–135 (YFVYIGIGMLGSAFLESFLLV). Over 136 to 187 (DRGEVLAGRYRKHYLSAVIRQNIAFYDKLGGGEVSTRIINDTNSIQEAISDK) the chain is Cytoplasmic. A helical transmembrane segment spans residues 188–208 (LGNVVQGIASFIAATVISFAS). At 209–214 (QWKLAC) the chain is on the extracellular side. The chain crosses the membrane as a helical span at residues 215 to 235 (ILLSAVGFMVITMGTGATFMA). At 236–293 (KYQLRSDAIYSQSGATVAEEALSAVRTTVAFGAQPHLAVKYEKVLDRVVKESKRSSYS) the chain is on the cytoplasmic side. The chain crosses the membrane as a helical span at residues 294–314 (LGVMLACIWASTFWVYALALW). Topologically, residues 315–326 (QGSREIVSGSAD) are extracellular. The chain crosses the membrane as a helical span at residues 327–347 (VGKIIVVITAMLLGSFQLGNI). Residues 348–725 (APNVRFLVKG…WGLNRKEWGY (378 aa)) lie on the Cytoplasmic side of the membrane. Positions 393-638 (IELKNVKFRY…EGPYKALVDA (246 aa)) constitute an ABC transporter 1 domain. Position 428 to 435 (428 to 435 (GASGSGKS)) interacts with ATP. Over residues 681-690 (SAGTQTTQPP) the composition is skewed to polar residues. Positions 681–703 (SAGTQTTQPPEYQENDIPGVRNP) are disordered. The chain crosses the membrane as a helical span at residues 726–746 (ILIGSLASIILGYCYPAMAII). The region spanning 727 to 1016 (LIGSLASIIL…IFSYAPNMNS (290 aa)) is the ABC transmembrane type-1 2 domain. Residues 747-769 (TGQTTGSMVLPPSEYGKMRHVVN) are Extracellular-facing. The chain crosses the membrane as a helical span at residues 770–790 (IMGWWYFFVGCISFMTAFITI). At 791–848 (AALSLASDKLVKNIRLALFRQLMRMDIAFFDHKNNTPGALTSILAKEAKMIEGLSGAT) the chain is on the cytoplasmic side. The chain crosses the membrane as a helical span at residues 849–869 (LGQIQQSLVTLIGGIVTGIPF). Over 870 to 874 (NWRIG) the chain is Extracellular. A helical transmembrane segment spans residues 875 to 895 (LVATSVVPVMLVCGFVRVWVL). The Cytoplasmic segment spans residues 896 to 954 (TQLSDRAREVYERSGSMASEYTSAVRTVQSLTRELDVVVKYTKTVDSQIFSSRIAIARS). A helical transmembrane segment spans residues 955–975 (ALYYALSEGMTPWVVALVFWW). Over 976-987 (GSTVMRRGEASV) the chain is Extracellular. The helical transmembrane segment at 988 to 1008 (AGYMTVFMAIITGSQAAGQIF) threads the bilayer. Topologically, residues 1009–1299 (SYAPNMNSAK…LVNLQGLGEI (291 aa)) are cytoplasmic. The 241-residue stretch at 1053-1293 (IEFRHVNFRY…NGWYAELVNL (241 aa)) folds into the ABC transporter 2 domain. 1088–1095 (GASGCGKS) contributes to the ATP binding site.

Belongs to the ABC transporter superfamily. ABCB family. Multidrug resistance exporter (TC 3.A.1.201) subfamily.

Its subcellular location is the cell membrane. In terms of biological role, transports acidic acylated and non-acylated sophorolipids (SLs) into the extracellular space, where they can be lactonized by lactone esterase. The chain is Sophorolipid transporter (mdr) from Starmerella bombicola (Yeast).